Reading from the N-terminus, the 217-residue chain is Large ribosomal subunit protein bL25 (217 aa).

The tract at residues 185–217 (TKETVEDEEAEEAAAEGAEETGETGETEEGGDE) is disordered. The segment covering 189-217 (VEDEEAEEAAAEGAEETGETGETEEGGDE) has biased composition (acidic residues).

This sequence belongs to the bacterial ribosomal protein bL25 family. CTC subfamily. As to quaternary structure, part of the 50S ribosomal subunit; part of the 5S rRNA/L5/L18/L25 subcomplex. Contacts the 5S rRNA. Binds to the 5S rRNA independently of L5 and L18.

In terms of biological role, this is one of the proteins that binds to the 5S RNA in the ribosome where it forms part of the central protuberance. The sequence is that of Large ribosomal subunit protein bL25 from Desulfosudis oleivorans (strain DSM 6200 / JCM 39069 / Hxd3) (Desulfococcus oleovorans).